An 862-amino-acid polypeptide reads, in one-letter code: DNA replication licensing factor MCM4 (862 aa).

Positions 1 to 12 (MASRGGGGGGDG) are enriched in gly residues. A disordered region spans residues 1–132 (MASRGGGGGG…GGGGGGAGAD (132 aa)). Composition is skewed to low complexity over residues 20-41 (SSPD…PQSG) and 52-64 (SASP…SLGG). A C4-type zinc finger spans residues 289–317 (CLVCGFYSEPVMVDRGRVTEPHICQKEQC). In terms of domain architecture, MCM spans 453–659 (IYDRLTRSLA…QTDRRLAKHI (207 aa)). An ATP-binding site is contributed by 503 to 510 (GDPGTSKS). The short motif at 635-638 (SRFD) is the Arginine finger element.

Belongs to the MCM family. As to quaternary structure, component of the minichromosome maintenance (MCM) complex, a heterotetramer composed of MCM2, MCM3, MCM4, MCM5, MCM6 and MCM7.

Its subcellular location is the nucleus. The enzyme catalyses ATP + H2O = ADP + phosphate + H(+). Its function is as follows. Probable component of the MCM2-7 complex (MCM complex) that may function as a DNA helicase and which is essential to undergo a single round of replication initiation and elongation per cell cycle in eukaryotic cells. In Oryza sativa subsp. japonica (Rice), this protein is DNA replication licensing factor MCM4 (MCM4).